The primary structure comprises 706 residues: Septin ring organizing protein mid2 (706 aa).

2 disordered regions span residues 62 to 102 (STAP…PFST) and 145 to 180 (DEAS…KKNP). Composition is skewed to polar residues over residues 81–90 (YDQTLSNSSS) and 149–169 (NKSS…SNQG). Residue serine 379 is modified to Phosphoserine. The region spanning 583–688 (TLLCDGYLCQ…WMSTLRQHLG (106 aa)) is the PH domain.

The protein belongs to the BUD4 family.

The protein localises to the cytoplasm. It is found in the cell cortex. The protein resides in the cytoskeleton. In terms of biological role, responsible for the proper stability and function of septins during cytokinesis. Required for the correct formation of the medial septin ring structure in mitosis and for the proper localization of endo-glucanases agn1 and eng1, which are needed for efficient cell separation. May act as a landmark for the localization of hydrolytic proteins to the medial region. The protein is Septin ring organizing protein mid2 (mid2) of Schizosaccharomyces pombe (strain 972 / ATCC 24843) (Fission yeast).